The primary structure comprises 265 residues: MLYTAEILTIGNELLTGRTVNTNASYIASRLTLMGFSVRRITAIRDELEEIASVIKEILGRSPAIVVVSGGLGPTYDDMTAEGIAKGLDRKLVMNEDALRELREKYQTRGLPLTQERLKMALLPEGAKPIRNEAGIAPGFTLNVNGTDIVATPGVPREMESVLESFLNHMLTRRPPVYYYEESFLVRGVMESTLAPHIKGIVKETGVYIKTHPKGHETSEPYLEVQIAYSGENPDRVKEIVRSVKERVKAVVRELGGTLDRVQNP.

This sequence belongs to the CinA family.

In Metallosphaera sedula (strain ATCC 51363 / DSM 5348 / JCM 9185 / NBRC 15509 / TH2), this protein is Protein Msed_2121.